The sequence spans 60 residues: Large ribosomal subunit protein uL30 (60 aa).

The protein belongs to the universal ribosomal protein uL30 family. Part of the 50S ribosomal subunit.

This Shewanella sp. (strain ANA-3) protein is Large ribosomal subunit protein uL30.